The chain runs to 617 residues: V-type proton ATPase catalytic subunit A (617 aa).

Asp2 carries the post-translational modification N-acetylalanine. Phosphothreonine is present on Thr136. Residue 250–257 (GAFGCGKT) participates in ATP binding. The residue at position 384 (Ser384) is a Phosphoserine; by AMPK.

This sequence belongs to the ATPase alpha/beta chains family. As to quaternary structure, V-ATPase is a heteromultimeric enzyme made up of two complexes: the ATP-hydrolytic V1 complex and the proton translocation V0 complex. The V1 complex consists of three catalytic AB heterodimers that form a heterohexamer, three peripheral stalks each consisting of EG heterodimers, one central rotor including subunits D and F, and the regulatory subunits C and H. The proton translocation complex V0 consists of the proton transport subunit a, a ring of proteolipid subunits c9c'', rotary subunit d, subunits e and f, and the accessory subunits ATP6AP1/Ac45 and ATP6AP2/PRR. Interacts with the V0 complex V-ATPase subunit a4 ATP6V0A4. Interacts with WFS1. Interacts with alpha-crystallin B chain/CRYAB and with MTOR, forming a ternary complex. In terms of assembly, (Microbial infection) Interacts with Rabies virus protein M; this interaction promotes virion uncoating. In terms of processing, phosphorylation at Ser-384 by AMPK down-regulates its enzyme activity. In terms of tissue distribution, high expression in the skin.

Its subcellular location is the cytoplasm. It is found in the cytosol. It localises to the cytoplasmic vesicle. The protein resides in the secretory vesicle. The protein localises to the clathrin-coated vesicle membrane. Its subcellular location is the lysosome. It carries out the reaction ATP + H2O + 4 H(+)(in) = ADP + phosphate + 5 H(+)(out). ATP hydrolysis occurs at the interface between the nucleotide-binding domains of subunits A and B. ATP hydrolysis triggers a conformational change in the subunits D and F, which induces a shift of subunit d. The c-ring is subsequently rotated and results in a continuous proton translocation across the membrane. Functionally, catalytic subunit of the V1 complex of vacuolar(H+)-ATPase (V-ATPase), a multisubunit enzyme composed of a peripheral complex (V1) that hydrolyzes ATP and a membrane integral complex (V0) that translocates protons. V-ATPase is responsible for acidifying and maintaining the pH of intracellular compartments and in some cell types, is targeted to the plasma membrane, where it is responsible for acidifying the extracellular environment. In aerobic conditions, involved in intracellular iron homeostasis, thus triggering the activity of Fe(2+) prolyl hydroxylase (PHD) enzymes, and leading to HIF1A hydroxylation and subsequent proteasomal degradation. May play a role in neurite development and synaptic connectivity. (Microbial infection) Plays an important role in virion uncoating during Rabies virus replication after membrane fusion. Specifically, participates in the dissociation of incoming viral matrix M proteins uncoating through direct interaction. This is V-type proton ATPase catalytic subunit A (ATP6V1A) from Homo sapiens (Human).